The primary structure comprises 419 residues: Serine hydroxymethyltransferase 2 (419 aa).

(6S)-5,6,7,8-tetrahydrofolate is bound by residues L120 and 124 to 126; that span reads GHL. Residue K229 is modified to N6-(pyridoxal phosphate)lysine.

The protein belongs to the SHMT family. Homodimer. The cofactor is pyridoxal 5'-phosphate.

It is found in the cytoplasm. It carries out the reaction (6R)-5,10-methylene-5,6,7,8-tetrahydrofolate + glycine + H2O = (6S)-5,6,7,8-tetrahydrofolate + L-serine. The protein operates within one-carbon metabolism; tetrahydrofolate interconversion. It participates in amino-acid biosynthesis; glycine biosynthesis; glycine from L-serine: step 1/1. Catalyzes the reversible interconversion of serine and glycine with tetrahydrofolate (THF) serving as the one-carbon carrier. This reaction serves as the major source of one-carbon groups required for the biosynthesis of purines, thymidylate, methionine, and other important biomolecules. Also exhibits THF-independent aldolase activity toward beta-hydroxyamino acids, producing glycine and aldehydes, via a retro-aldol mechanism. This is Serine hydroxymethyltransferase 2 from Salmonella typhi.